Consider the following 228-residue polypeptide: Prolactin-2B1 (228 aa).

An N-terminal signal peptide occupies residues 1–31 (MLLYLPQIFSSRASSLLFLVPYLLFWENVAS). 2 cysteine pairs are disulfide-bonded: cysteine 89–cysteine 194 and cysteine 203–cysteine 228. Residue asparagine 173 is glycosylated (N-linked (GlcNAc...) asparagine).

It belongs to the somatotropin/prolactin family. Expression restricted to the placenta in trophoblast cells within the labyrinth zone.

It localises to the secreted. The protein is Prolactin-2B1 (Prl2b1) of Rattus norvegicus (Rat).